The sequence spans 25 residues: Small ribosomal subunit protein eS32B (25 aa).

The interval 1 to 25 (MRAKWRKKRTRRLKRKRRKVRARSK) is disordered.

It belongs to the eukaryotic ribosomal protein eS32 family. Component of the small ribosomal subunit (SSU). Mature yeast ribosomes consist of a small (40S) and a large (60S) subunit. The 40S small subunit contains 1 molecule of ribosomal RNA (18S rRNA) and 33 different proteins (encoded by 57 genes). The large 60S subunit contains 3 rRNA molecules (25S, 5.8S and 5S rRNA) and 46 different proteins (encoded by 81 genes).

The protein localises to the cytoplasm. Functionally, component of the ribosome, a large ribonucleoprotein complex responsible for the synthesis of proteins in the cell. The small ribosomal subunit (SSU) binds messenger RNAs (mRNAs) and translates the encoded message by selecting cognate aminoacyl-transfer RNA (tRNA) molecules. The large subunit (LSU) contains the ribosomal catalytic site termed the peptidyl transferase center (PTC), which catalyzes the formation of peptide bonds, thereby polymerizing the amino acids delivered by tRNAs into a polypeptide chain. The nascent polypeptides leave the ribosome through a tunnel in the LSU and interact with protein factors that function in enzymatic processing, targeting, and the membrane insertion of nascent chains at the exit of the ribosomal tunnel. This chain is Small ribosomal subunit protein eS32B, found in Saccharomyces cerevisiae (strain ATCC 204508 / S288c) (Baker's yeast).